The chain runs to 215 residues: 3,4-dihydroxy-2-butanone 4-phosphate synthase (215 aa).

Residues 37-38, Asp42, 150-154, and Glu175 contribute to the D-ribulose 5-phosphate site; these read RE and RRGHT. Residue Glu38 coordinates Mg(2+). His153 contributes to the Mg(2+) binding site.

The protein belongs to the DHBP synthase family. As to quaternary structure, homodimer. Requires Mg(2+) as cofactor. The cofactor is Mn(2+).

It carries out the reaction D-ribulose 5-phosphate = (2S)-2-hydroxy-3-oxobutyl phosphate + formate + H(+). It functions in the pathway cofactor biosynthesis; riboflavin biosynthesis; 2-hydroxy-3-oxobutyl phosphate from D-ribulose 5-phosphate: step 1/1. Its function is as follows. Catalyzes the conversion of D-ribulose 5-phosphate to formate and 3,4-dihydroxy-2-butanone 4-phosphate. In Desulfatibacillum aliphaticivorans, this protein is 3,4-dihydroxy-2-butanone 4-phosphate synthase.